The following is a 243-amino-acid chain: Eukaryotic translation initiation factor 4E-2 (243 aa).

This sequence belongs to the eukaryotic initiation factor 4E family. In terms of assembly, eIF4F is a multi-subunit complex, the composition of which varies with external and internal environmental conditions. It is composed of at least eIF4A, eIF4E and eIF4G. eIF4E is also known to interact with other partners.

In terms of biological role, recognizes and binds the 7-methylguanosine-containing mRNA cap during an early step in the initiation of protein synthesis and facilitates ribosome binding by inducing the unwinding of the mRNAs secondary structures. The polypeptide is Eukaryotic translation initiation factor 4E-2 (tif452) (Schizosaccharomyces pombe (strain 972 / ATCC 24843) (Fission yeast)).